A 143-amino-acid polypeptide reads, in one-letter code: MTEIETIGFHYVVEAAGCDPEVLGNADRIRQIFLEAAKVGNMEVKASYFFKFSPTGVSGVVIVAESHISVHTWPEKGYAALDVYTCGTKANPEKAVDYILEQFKAKYAHVSEIKRGIEEDDETFTHMIMTWEEALRKNGNGSG.

S66 (schiff-base intermediate with substrate; via pyruvic acid) is an active-site residue. At S66 the chain carries Pyruvic acid (Ser); by autocatalysis. The Proton acceptor; for processing activity role is filled by H71. C86 serves as the catalytic Proton donor; for catalytic activity.

Belongs to the prokaryotic AdoMetDC family. Type 1 subfamily. As to quaternary structure, heterotetramer of two alpha and two beta chains arranged as a dimer of alpha/beta heterodimers. The cofactor is pyruvate. In terms of processing, is synthesized initially as an inactive proenzyme. Formation of the active enzyme involves a self-maturation process in which the active site pyruvoyl group is generated from an internal serine residue via an autocatalytic post-translational modification. Two non-identical subunits are generated from the proenzyme in this reaction, and the pyruvate is formed at the N-terminus of the alpha chain, which is derived from the carboxyl end of the proenzyme. The post-translation cleavage follows an unusual pathway, termed non-hydrolytic serinolysis, in which the side chain hydroxyl group of the serine supplies its oxygen atom to form the C-terminus of the beta chain, while the remainder of the serine residue undergoes an oxidative deamination to produce ammonia and the pyruvoyl group blocking the N-terminus of the alpha chain.

The catalysed reaction is S-adenosyl-L-methionine + H(+) = S-adenosyl 3-(methylsulfanyl)propylamine + CO2. The protein operates within amine and polyamine biosynthesis; S-adenosylmethioninamine biosynthesis; S-adenosylmethioninamine from S-adenosyl-L-methionine: step 1/1. In terms of biological role, catalyzes the decarboxylation of S-adenosylmethionine to S-adenosylmethioninamine (dcAdoMet), the propylamine donor required for the synthesis of the polyamines spermine and spermidine from the diamine putrescine. The polypeptide is S-adenosylmethionine decarboxylase proenzyme (Thermococcus kodakarensis (strain ATCC BAA-918 / JCM 12380 / KOD1) (Pyrococcus kodakaraensis (strain KOD1))).